The chain runs to 348 residues: NADH-ubiquinone oxidoreductase chain 2 (348 aa).

The next 9 membrane-spanning stretches (helical) occupy residues 1 to 21 (MSPY…TITA), 60 to 80 (FLTQ…NAWL), 96 to 116 (TLII…TWLP), 149 to 169 (NPTL…WGGL), 177 to 194 (ILAY…LILQ), 198 to 220 (TLTL…TFIL), 238 to 258 (ILTS…PLTG), 273 to 293 (DLAP…YFYL), and 328 to 348 (MAAS…LFNI).

It belongs to the complex I subunit 2 family.

Its subcellular location is the mitochondrion inner membrane. It carries out the reaction a ubiquinone + NADH + 5 H(+)(in) = a ubiquinol + NAD(+) + 4 H(+)(out). Functionally, core subunit of the mitochondrial membrane respiratory chain NADH dehydrogenase (Complex I) that is believed to belong to the minimal assembly required for catalysis. Complex I functions in the transfer of electrons from NADH to the respiratory chain. The immediate electron acceptor for the enzyme is believed to be ubiquinone. In Tetraodon nigroviridis (Spotted green pufferfish), this protein is NADH-ubiquinone oxidoreductase chain 2 (MT-ND2).